The sequence spans 458 residues: Cell division protein FtsZ (458 aa).

GTP contacts are provided by residues 22 to 26 (GAGGN), 109 to 111 (GTG), Glu-140, Arg-144, and Asp-188. The disordered stretch occupies residues 319–458 (KAEEEASKQP…IPFFKHRRQD (140 aa)). A compositionally biased stretch (polar residues) spans 368–379 (NTISHEAPTQSI). Residues 401–418 (KQDRKENNRPQPVENKEK) show a composition bias toward basic and acidic residues. Over residues 425-439 (SFSSDDSTSISQIET) the composition is skewed to low complexity.

It belongs to the FtsZ family. As to quaternary structure, homodimer. Polymerizes to form a dynamic ring structure in a strictly GTP-dependent manner. Interacts directly with several other division proteins.

The protein localises to the cytoplasm. Functionally, essential cell division protein that forms a contractile ring structure (Z ring) at the future cell division site. The regulation of the ring assembly controls the timing and the location of cell division. One of the functions of the FtsZ ring is to recruit other cell division proteins to the septum to produce a new cell wall between the dividing cells. Binds GTP and shows GTPase activity. This is Cell division protein FtsZ from Lactobacillus johnsonii (strain CNCM I-12250 / La1 / NCC 533).